The chain runs to 155 residues: 1,4-dihydroxy-2-naphthoyl-CoA hydrolase (155 aa).

Asp27 is a catalytic residue.

This sequence belongs to the 4-hydroxybenzoyl-CoA thioesterase family. DHNA-CoA hydrolase subfamily.

It carries out the reaction 1,4-dihydroxy-2-naphthoyl-CoA + H2O = 1,4-dihydroxy-2-naphthoate + CoA + H(+). Its pathway is cofactor biosynthesis; phylloquinone biosynthesis. It participates in quinol/quinone metabolism; 1,4-dihydroxy-2-naphthoate biosynthesis; 1,4-dihydroxy-2-naphthoate from chorismate: step 7/7. In terms of biological role, catalyzes the hydrolysis of 1,4-dihydroxy-2-naphthoyl-CoA (DHNA-CoA) to 1,4-dihydroxy-2-naphthoate (DHNA), a reaction involved in phylloquinone (vitamin K1) biosynthesis. This chain is 1,4-dihydroxy-2-naphthoyl-CoA hydrolase, found in Prochlorococcus marinus (strain NATL2A).